A 225-amino-acid chain; its full sequence is PKHD-type hydroxylase YbiX (225 aa).

The Fe2OG dioxygenase domain occupies 78–177 (TLSTPLFNRY…RVASFMWIQS (100 aa)). Histidine 96, aspartate 98, and histidine 158 together coordinate Fe cation. A 2-oxoglutarate-binding site is contributed by arginine 168.

It depends on Fe(2+) as a cofactor. Requires L-ascorbate as cofactor.

The protein is PKHD-type hydroxylase YbiX of Escherichia coli O6:K15:H31 (strain 536 / UPEC).